The following is a 158-amino-acid chain: Regulator of sigma D (158 aa).

It belongs to the Rsd/AlgQ family. As to quaternary structure, interacts with RpoD.

The protein resides in the cytoplasm. In terms of biological role, binds RpoD and negatively regulates RpoD-mediated transcription activation by preventing the interaction between the primary sigma factor RpoD with the catalytic core of the RNA polymerase and with promoter DNA. May be involved in replacement of the RNA polymerase sigma subunit from RpoD to RpoS during the transition from exponential growth to the stationary phase. The polypeptide is Regulator of sigma D (Escherichia fergusonii (strain ATCC 35469 / DSM 13698 / CCUG 18766 / IAM 14443 / JCM 21226 / LMG 7866 / NBRC 102419 / NCTC 12128 / CDC 0568-73)).